Here is a 160-residue protein sequence, read N- to C-terminus: Fluoride-specific ion channel FluC (160 aa).

Helical transmembrane passes span leucine 5 to phenylalanine 25, phenylalanine 34 to phenylalanine 54, phenylalanine 67 to valine 87, and phenylalanine 99 to isoleucine 119. Positions 74 and 77 each coordinate Na(+).

This sequence belongs to the fluoride channel Fluc/FEX (TC 1.A.43) family.

Its subcellular location is the cell inner membrane. The catalysed reaction is fluoride(in) = fluoride(out). Its activity is regulated as follows. Na(+) is not transported, but it plays an essential structural role and its presence is essential for fluoride channel function. Functionally, fluoride-specific ion channel. Important for reducing fluoride concentration in the cell, thus reducing its toxicity. The chain is Fluoride-specific ion channel FluC from Haemophilus influenzae (strain ATCC 51907 / DSM 11121 / KW20 / Rd).